Consider the following 280-residue polypeptide: Four and a half LIM domains protein 3 (280 aa).

N-acetylserine is present on serine 2. The segment at 7-31 adopts a C4-type zinc-finger fold; sequence CAKCSESLYGRKYIQTDDGPYCVPC. LIM zinc-binding domains lie at 40-92 and 101-153; these read CAEC…CNDC and CSAC…CVPC. Position 157 is an N6-acetyllysine (lysine 157). 2 LIM zinc-binding domains span residues 162-212 and 221-275; these read CARC…CVTC and CSSC…CQGC. Lysine 235 carries the post-translational modification N6-acetyllysine.

In terms of assembly, interacts with SOX15; the interaction recruits FHL3 to FOXK1 promoters where it acts as a transcriptional coactivator of FOXK1.

It localises to the nucleus. The protein localises to the cytoplasm. In terms of biological role, recruited by SOX15 to FOXK1 promoters where it acts as a transcriptional coactivator of FOXK1. The polypeptide is Four and a half LIM domains protein 3 (FHL3) (Bos taurus (Bovine)).